We begin with the raw amino-acid sequence, 196 residues long: ATP-dependent Clp protease proteolytic subunit (196 aa).

Ser101 (nucleophile) is an active-site residue. His126 is a catalytic residue.

This sequence belongs to the peptidase S14 family. As to quaternary structure, component of the chloroplastic Clp protease core complex.

The protein localises to the plastid. Its subcellular location is the chloroplast stroma. The enzyme catalyses Hydrolysis of proteins to small peptides in the presence of ATP and magnesium. alpha-casein is the usual test substrate. In the absence of ATP, only oligopeptides shorter than five residues are hydrolyzed (such as succinyl-Leu-Tyr-|-NHMec, and Leu-Tyr-Leu-|-Tyr-Trp, in which cleavage of the -Tyr-|-Leu- and -Tyr-|-Trp bonds also occurs).. Cleaves peptides in various proteins in a process that requires ATP hydrolysis. Has a chymotrypsin-like activity. Plays a major role in the degradation of misfolded proteins. In Coffea arabica (Arabian coffee), this protein is ATP-dependent Clp protease proteolytic subunit.